A 291-amino-acid chain; its full sequence is MKRNDPCWCGSGRKWKQCHYPQPPKMSPEALKQHYASQYNILLKTPEQKAKIYNACQITARILDELCKASQKGVTTNELDELSQELHKKYDAIAAPFHYGSPPFPKTICTSLNEVICHGIPNDIPLKDGDIMNIDVSCIVDGYYGDCSRMVMIGEVPEIKKKICQAALECLNDSIAILKPGIPLCEIGEAIEARADTYGFSVVDQFVGHGVGIEFHENPYVPHYRNRSMIPLAPGMIFTIEPMINVGKKEGVVDPKNQWEARTCDNQPSAQWEHTIAITETGYEILTLLND.

Histidine 118 lines the substrate pocket. A divalent metal cation contacts are provided by aspartate 135, aspartate 146, and histidine 209. Substrate is bound at residue histidine 216. Residues glutamate 241 and glutamate 273 each contribute to the a divalent metal cation site.

The protein belongs to the peptidase M24A family. Methionine aminopeptidase type 1 subfamily. As to quaternary structure, monomer. Co(2+) serves as cofactor. The cofactor is Zn(2+). Mn(2+) is required as a cofactor. It depends on Fe(2+) as a cofactor.

The enzyme catalyses Release of N-terminal amino acids, preferentially methionine, from peptides and arylamides.. Functionally, removes the N-terminal methionine from nascent proteins. The N-terminal methionine is often cleaved when the second residue in the primary sequence is small and uncharged (Met-Ala-, Cys, Gly, Pro, Ser, Thr, or Val). Requires deformylation of the N(alpha)-formylated initiator methionine before it can be hydrolyzed. In Chlamydia pneumoniae (Chlamydophila pneumoniae), this protein is Methionine aminopeptidase.